Consider the following 71-residue polypeptide: Large ribosomal subunit protein bL31 (71 aa).

The protein belongs to the bacterial ribosomal protein bL31 family. Type A subfamily. Part of the 50S ribosomal subunit.

Binds the 23S rRNA. The sequence is that of Large ribosomal subunit protein bL31 (rpmE) from Mycoplasmopsis synoviae (strain 53) (Mycoplasma synoviae).